We begin with the raw amino-acid sequence, 544 residues long: Chaperonin GroEL (544 aa).

Residues 29 to 32 (TLGP), 86 to 90 (DGTTT), G413, 476 to 478 (NAA), and D492 each bind ATP. Residues 522–544 (PDPNANNNAAAGANPAAGMGGMM) are disordered. The segment covering 524 to 538 (PNANNNAAAGANPAA) has biased composition (low complexity).

It belongs to the chaperonin (HSP60) family. Forms a cylinder of 14 subunits composed of two heptameric rings stacked back-to-back. Interacts with the co-chaperonin GroES.

The protein resides in the cytoplasm. It catalyses the reaction ATP + H2O + a folded polypeptide = ADP + phosphate + an unfolded polypeptide.. Functionally, together with its co-chaperonin GroES, plays an essential role in assisting protein folding. The GroEL-GroES system forms a nano-cage that allows encapsulation of the non-native substrate proteins and provides a physical environment optimized to promote and accelerate protein folding. The polypeptide is Chaperonin GroEL (Lacticaseibacillus casei (strain BL23) (Lactobacillus casei)).